The sequence spans 113 residues: MIKLKVKKGDEVVIITGKYKGKKGKVLKVFPEENTVVVSGVNLVKKHTKPNKMSEGGIITQESPIHISNIAHIDPKTGNPTKVAFKFLEDGSKVRVAKKSGEIIGKVGNNVKV.

The protein belongs to the universal ribosomal protein uL24 family. In terms of assembly, part of the 50S ribosomal subunit.

Functionally, one of two assembly initiator proteins, it binds directly to the 5'-end of the 23S rRNA, where it nucleates assembly of the 50S subunit. One of the proteins that surrounds the polypeptide exit tunnel on the outside of the subunit. This chain is Large ribosomal subunit protein uL24, found in Rickettsia prowazekii (strain Madrid E).